The primary structure comprises 412 residues: L-threonine:uridine-5'-aldehyde transaldolase (412 aa).

Lys-229 carries the post-translational modification N6-(pyridoxal phosphate)lysine.

This sequence belongs to the SHMT family. Pyridoxal 5'-phosphate is required as a cofactor.

It carries out the reaction uridine-5'-aldehyde + L-threonine = (5'S,6'S)-C-glycyluridine + acetaldehyde. The protein operates within antibiotic biosynthesis. In terms of biological role, transaldolase involved in the biosynthesis of the capuramycin-type nucleoside antibiotic A-503083. Catalyzes the condensation of L-threonine and uridine-5'-aldehyde to form 5'-C-glycyluridine (GlyU). Forms (5'S,6'S)-GlyU. In Streptomyces sp, this protein is L-threonine:uridine-5'-aldehyde transaldolase.